The sequence spans 337 residues: Heme A synthase (337 aa).

7 helical membrane passes run 3–23 (LARW…IGGI), 94–114 (VIGL…MIPA), 120–140 (LLAL…MVAS), 154–174 (LSAH…TALD), 191–211 (GVAW…AWVA), 248–268 (FLLH…LVVL), and 289–309 (TMVV…IAVA). H254 lines the heme pocket. H310 contributes to the heme binding site. Residues 311–331 (QLTGALLVISTAWAAHAIGTA) form a helical membrane-spanning segment.

This sequence belongs to the COX15/CtaA family. Type 2 subfamily. Interacts with CtaB. It depends on heme b as a cofactor.

Its subcellular location is the cell membrane. The catalysed reaction is Fe(II)-heme o + 2 A + H2O = Fe(II)-heme a + 2 AH2. It participates in porphyrin-containing compound metabolism; heme A biosynthesis; heme A from heme O: step 1/1. Functionally, catalyzes the conversion of heme O to heme A by two successive hydroxylations of the methyl group at C8. The first hydroxylation forms heme I, the second hydroxylation results in an unstable dihydroxymethyl group, which spontaneously dehydrates, resulting in the formyl group of heme A. This is Heme A synthase from Erythrobacter litoralis (strain HTCC2594).